The primary structure comprises 153 residues: Catabolic 3-dehydroquinase (153 aa).

Tyr24 serves as the catalytic Proton acceptor. Asn75, His81, and Asp88 together coordinate substrate. Residue His101 is the Proton donor of the active site. Residues 102 to 103 and Arg112 contribute to the substrate site; that span reads VS.

This sequence belongs to the type-II 3-dehydroquinase family. As to quaternary structure, homododecamer. Adopts a ring-like structure, composed of an arrangement of two hexameric rings stacked on top of one another.

The enzyme catalyses 3-dehydroquinate = 3-dehydroshikimate + H2O. It participates in aromatic compound metabolism; 3,4-dihydroxybenzoate biosynthesis; 3,4-dihydroxybenzoate from 3-dehydroquinate: step 1/2. Functionally, is involved in the catabolism of quinate. Allows the utilization of quinate as carbon source via the beta-ketoadipate pathway. The chain is Catabolic 3-dehydroquinase from Emericella nidulans (strain FGSC A4 / ATCC 38163 / CBS 112.46 / NRRL 194 / M139) (Aspergillus nidulans).